The chain runs to 849 residues: Autoinducer 1 sensor kinase/phosphatase LuxN (849 aa).

7 consecutive transmembrane segments (helical) span residues 9-29, 41-61, 160-180, 196-216, 220-242, 251-275, and 283-301; these read IVYA…MWLF, VIFG…IAWI, SYFF…LVAM, IAGI…MTYF, FSLT…YALL, YIAY…AIFI, and WLIA…QLLY. Positions 468–683 constitute a Histidine kinase domain; it reads SIAHEMRNPL…EFHLYFPVVP (216 aa). Position 471 is a phosphohistidine; by autocatalysis (H471). Residues 722 to 835 enclose the Response regulatory domain; the sequence is TVLIVDDKEV…ALRHVLGNWL (114 aa). At D771 the chain carries 4-aspartylphosphate.

The protein resides in the cell inner membrane. It catalyses the reaction ATP + protein L-histidine = ADP + protein N-phospho-L-histidine.. At low cell density, in the absence of AI-1 (autoinducer 1), LuxN has a kinase activity and autophosphorylates on His-471. The phosphoryl group is then transferred on Asp-771 of the response regulator domain. The phosphoryl group is transferred to LuxU, and ultimately to LuxO. At high cell density, in the presence of AI-1, the kinase activity is inactivated, and the response regulator domain has a phosphatase activity. LuxN phosphatase acts on itself. As LuxU could function to establish an equilibrium between the aspartyl-phosphate of LuxN and the aspartyl-phosphate of LuxO, LuxU transfers phosphate from LuxO to LuxN and finally phosphate is drained from the system. This is Autoinducer 1 sensor kinase/phosphatase LuxN (luxN) from Vibrio harveyi (Beneckea harveyi).